The primary structure comprises 1161 residues: BMP-2-inducible protein kinase (1161 aa).

The segment at 1–20 is disordered; it reads MKKFSRMPKSEGGSGGGAAG. Ser-14 is modified (phosphoserine). The region spanning 51–316 is the Protein kinase domain; that stretch reads VTLEESLAEG…DIFQVSYFAF (266 aa). Residues 57 to 65 and Lys-79 each bind ATP; that span reads LAEGGFSTV. Asp-180 serves as the catalytic Proton acceptor. Disordered stretches follow at residues 358–439, 453–495, 610–630, and 655–832; these read TDTI…RVLQ, LQHR…HHHL, TNQK…FGED, and ERAS…TQDL. Residues 361–394 show a composition bias toward polar residues; it reads IGPTETSIAPRQRPKANSATTATPSVLTIQSSAT. Low complexity-rich tracts occupy residues 422 to 439 and 460 to 485; these read LLGQ…RVLQ and QQQQ…QQQQ. A compositionally biased stretch (polar residues) spans 610–619; that stretch reads TNQKNISNPP. Position 689 is a phosphoserine (Ser-689). Composition is skewed to polar residues over residues 697–718 and 726–735; these read SSIN…SPAS and KTSVQGQVQK. At Ser-742 the chain carries Phosphoserine. Over residues 755–779 the composition is skewed to acidic residues; it reads EEEEQDDEEVLQGEQGDFNDDDTEP. Residues 798-813 are compositionally biased toward basic and acidic residues; it reads EKHSSDSDYEQAKAKY. A phosphoserine mark is found at Ser-817 and Ser-818. Thr-834 carries the phosphothreonine modification. Ser-928 is modified (phosphoserine). Positions 965–1035 are disordered; that stretch reads SQQQKVKQRS…RRDSQSSNEF (71 aa). Basic residues predominate over residues 970-984; the sequence is VKQRSLQKLSSRQRR. The span at 1000-1011 shows a compositional bias: low complexity; sequence TPTSTKKTLKPT. Residues Ser-1029, Ser-1031, Ser-1032, Ser-1039, Ser-1041, Ser-1076, Ser-1107, and Ser-1111 each carry the phosphoserine modification. Residues 1137-1146 are compositionally biased toward polar residues; the sequence is TPHQSQQSQP. The segment at 1137–1161 is disordered; that stretch reads TPHQSQQSQPVELDPFGAAPFPSKQ.

This sequence belongs to the protein kinase superfamily. Ser/Thr protein kinase family. In terms of processing, autophosphorylated.

The protein resides in the nucleus. It carries out the reaction L-seryl-[protein] + ATP = O-phospho-L-seryl-[protein] + ADP + H(+). It catalyses the reaction L-threonyl-[protein] + ATP = O-phospho-L-threonyl-[protein] + ADP + H(+). Its function is as follows. May be involved in osteoblast differentiation. This chain is BMP-2-inducible protein kinase (BMP2K), found in Homo sapiens (Human).